Reading from the N-terminus, the 167-residue chain is uncharacterized protein (167 aa).

Residues Ser140 to Phe167 form a disordered region. Over residues Lys145–Lys154 the composition is skewed to basic residues.

This is an uncharacterized protein from Saccharomyces cerevisiae (strain ATCC 204508 / S288c) (Baker's yeast).